The primary structure comprises 388 residues: 4-hydroxy-3-methylbut-2-en-1-yl diphosphate synthase (flavodoxin) (388 aa).

Cysteine 281, cysteine 284, cysteine 316, and glutamate 323 together coordinate [4Fe-4S] cluster.

It belongs to the IspG family. Requires [4Fe-4S] cluster as cofactor.

It carries out the reaction (2E)-4-hydroxy-3-methylbut-2-enyl diphosphate + oxidized [flavodoxin] + H2O + 2 H(+) = 2-C-methyl-D-erythritol 2,4-cyclic diphosphate + reduced [flavodoxin]. The protein operates within isoprenoid biosynthesis; isopentenyl diphosphate biosynthesis via DXP pathway; isopentenyl diphosphate from 1-deoxy-D-xylulose 5-phosphate: step 5/6. In terms of biological role, converts 2C-methyl-D-erythritol 2,4-cyclodiphosphate (ME-2,4cPP) into 1-hydroxy-2-methyl-2-(E)-butenyl 4-diphosphate. The sequence is that of 4-hydroxy-3-methylbut-2-en-1-yl diphosphate synthase (flavodoxin) from Paenarthrobacter aurescens (strain TC1).